A 915-amino-acid chain; its full sequence is Probable dipeptidyl-aminopeptidase B (915 aa).

A disordered region spans residues 1-82 (MAPPFTDDPE…GAFLGPPGVP (82 aa)). The Cytoplasmic segment spans residues 1–94 (MAPPFTDDPE…RQPMDRGFRR (94 aa)). Positions 15 to 32 (STSRLSQDSLSSVSTTSL) are enriched in low complexity. Residues 36 to 62 (RIQEEMDRDPSASRSARRDLLPATKDE) show a composition bias toward basic and acidic residues. Residues 95 to 115 (ILIIIGAVFVGAWLAGLGIFV) form a helical; Signal-anchor for type II membrane protein membrane-spanning segment. Topologically, residues 116-915 (LSGSYKHESD…IDTKKRRHVS (800 aa)) are vacuolar. Residues N355 and N577 are each glycosylated (N-linked (GlcNAc...) asparagine). S760 (charge relay system) is an active-site residue. N-linked (GlcNAc...) asparagine glycosylation occurs at N819. Catalysis depends on charge relay system residues D837 and H870.

It belongs to the peptidase S9B family.

The protein localises to the vacuole membrane. It carries out the reaction Release of an N-terminal dipeptide, Xaa-Yaa-|-Zaa-, from a polypeptide, preferentially when Yaa is Pro, provided Zaa is neither Pro nor hydroxyproline.. In terms of biological role, type IV dipeptidyl-peptidase which removes N-terminal dipeptides sequentially from polypeptides having unsubstituted N-termini provided that the penultimate residue is proline. This Metarhizium robertsii (strain ARSEF 23 / ATCC MYA-3075) (Metarhizium anisopliae (strain ARSEF 23)) protein is Probable dipeptidyl-aminopeptidase B (DAPB).